Consider the following 146-residue polypeptide: 3-hydroxyacyl-[acyl-carrier-protein] dehydratase FabZ (146 aa).

Histidine 48 is a catalytic residue.

It belongs to the thioester dehydratase family. FabZ subfamily.

It localises to the cytoplasm. It carries out the reaction a (3R)-hydroxyacyl-[ACP] = a (2E)-enoyl-[ACP] + H2O. Involved in unsaturated fatty acids biosynthesis. Catalyzes the dehydration of short chain beta-hydroxyacyl-ACPs and long chain saturated and unsaturated beta-hydroxyacyl-ACPs. This Teredinibacter turnerae (strain ATCC 39867 / T7901) protein is 3-hydroxyacyl-[acyl-carrier-protein] dehydratase FabZ.